Consider the following 642-residue polypeptide: Probable malate:quinone oxidoreductase (642 aa).

Positions 1–142 (MIVVFRHEST…TTRGDKRKLN (142 aa)) are unknown. The tract at residues 143 to 642 (MSDSPKNAQK…TQKTLKLEKA (500 aa)) is MQO domain.

It in the C-terminal section; belongs to the MQO family. The cofactor is FAD.

The enzyme catalyses (S)-malate + a quinone = a quinol + oxaloacetate. Its pathway is carbohydrate metabolism; tricarboxylic acid cycle; oxaloacetate from (S)-malate (quinone route): step 1/1. In Corynebacterium efficiens (strain DSM 44549 / YS-314 / AJ 12310 / JCM 11189 / NBRC 100395), this protein is Probable malate:quinone oxidoreductase (mqo).